The following is a 443-amino-acid chain: Glutamate-1-semialdehyde 2,1-aminomutase (443 aa).

Lys-272 is subject to N6-(pyridoxal phosphate)lysine.

This sequence belongs to the class-III pyridoxal-phosphate-dependent aminotransferase family. HemL subfamily. In terms of assembly, homodimer. Pyridoxal 5'-phosphate serves as cofactor.

It localises to the cytoplasm. It catalyses the reaction (S)-4-amino-5-oxopentanoate = 5-aminolevulinate. Its pathway is porphyrin-containing compound metabolism; protoporphyrin-IX biosynthesis; 5-aminolevulinate from L-glutamyl-tRNA(Glu): step 2/2. It functions in the pathway porphyrin-containing compound metabolism; chlorophyll biosynthesis. The polypeptide is Glutamate-1-semialdehyde 2,1-aminomutase (Chloroflexus aurantiacus (strain ATCC 29366 / DSM 635 / J-10-fl)).